We begin with the raw amino-acid sequence, 295 residues long: Sulfotransferase 1A1 (295 aa).

48-53 (KSGTTW) contributes to the 3'-phosphoadenylyl sulfate binding site. 106–108 (KTH) is a binding site for substrate. Histidine 108 serves as the catalytic Proton acceptor. Residues arginine 130, serine 138, tyrosine 193, 227–232 (TSFKEM), and 255–259 (FMRKG) each bind 3'-phosphoadenylyl sulfate. The residue at position 138 (serine 138) is a Phosphoserine.

Belongs to the sulfotransferase 1 family. In terms of assembly, homodimer. Ubiquitously expressed in canine tissues with highest expression in male and female liver.

It localises to the cytoplasm. The enzyme catalyses a phenol + 3'-phosphoadenylyl sulfate = an aryl sulfate + adenosine 3',5'-bisphosphate + H(+). It catalyses the reaction 17beta-estradiol + 3'-phosphoadenylyl sulfate = 17beta-estradiol 3-sulfate + adenosine 3',5'-bisphosphate + H(+). It carries out the reaction 4-ethylphenol + 3'-phosphoadenylyl sulfate = 4-ethylphenyl sulfate + adenosine 3',5'-bisphosphate + H(+). The catalysed reaction is 4-nitrophenol + 3'-phosphoadenylyl sulfate = 4-nitrophenyl sulfate + adenosine 3',5'-bisphosphate. The enzyme catalyses dopamine + 3'-phosphoadenylyl sulfate = dopamine 3-O-sulfate + adenosine 3',5'-bisphosphate + H(+). It catalyses the reaction dopamine + 3'-phosphoadenylyl sulfate = dopamine 4-O-sulfate + adenosine 3',5'-bisphosphate + H(+). It carries out the reaction 3,3',5-triiodo-L-thyronine + 3'-phosphoadenylyl sulfate = 3,3',5-triiodo-L-thyronine sulfate + adenosine 3',5'-bisphosphate + H(+). The catalysed reaction is 3,3',5'-triiodo-L-thyronine + 3'-phosphoadenylyl sulfate = 3,3',5'-triiodo-L-thyronine sulfate + adenosine 3',5'-bisphosphate + H(+). The enzyme catalyses 3,3'-diiodo-L-thyronine + 3'-phosphoadenylyl sulfate = 3,3'-diiodo-L-thyronine sulfate + adenosine 3',5'-bisphosphate + H(+). It catalyses the reaction L-thyroxine + 3'-phosphoadenylyl sulfate = L-thyroxine sulfate + adenosine 3',5'-bisphosphate + H(+). Sulfotransferase that utilizes 3'-phospho-5'-adenylyl sulfate (PAPS) as sulfonate donor to catalyze the sulfate conjugation of a wide variety of acceptor molecules bearing a hydroxyl or an amine group. Sulfonation increases the water solubility of most compounds, and therefore their renal excretion, but it can also result in bioactivation to form active metabolites. Displays broad substrate specificity for small phenolic compounds. Plays an important role in the sulfonation of endogenous molecules such as steroid hormones. Mediates also the metabolic activation of carcinogenic N-hydroxyarylamines leading to highly reactive intermediates capable of forming DNA adducts, potentially resulting in mutagenesis. May play a role in gut microbiota-host metabolic interaction. O-sulfonates 4-ethylphenol (4-EP), a dietary tyrosine-derived metabolite produced by gut bacteria. The product 4-EPS crosses the blood-brain barrier and may negatively regulate oligodendrocyte maturation and myelination, affecting the functional connectivity of different brain regions associated with the limbic system. Catalyzes the sulfate conjugation of dopamine. Catalyzes the sulfation of T4 (L-thyroxine/3,5,3',5'-tetraiodothyronine), T3 (3,5,3'-triiodothyronine), rT3 (3,3',5'-triiodothyronine) and 3,3'-T2 (3,3'-diiodothyronine), with a substrate preference of 3,3'-T2 &gt; rT3 &gt; T3 &gt; T4. In Canis lupus familiaris (Dog), this protein is Sulfotransferase 1A1 (SULT1A1).